Consider the following 155-residue polypeptide: Small ribosomal subunit protein uS7 (155 aa).

Belongs to the universal ribosomal protein uS7 family. In terms of assembly, part of the 30S ribosomal subunit. Contacts proteins S9 and S11.

Its function is as follows. One of the primary rRNA binding proteins, it binds directly to 16S rRNA where it nucleates assembly of the head domain of the 30S subunit. Is located at the subunit interface close to the decoding center, probably blocks exit of the E-site tRNA. This is Small ribosomal subunit protein uS7 from Pseudothermotoga lettingae (strain ATCC BAA-301 / DSM 14385 / NBRC 107922 / TMO) (Thermotoga lettingae).